Reading from the N-terminus, the 369-residue chain is Aminomethyltransferase (369 aa).

The protein belongs to the GcvT family. In terms of assembly, the glycine cleavage system is composed of four proteins: P, T, L and H.

It carries out the reaction N(6)-[(R)-S(8)-aminomethyldihydrolipoyl]-L-lysyl-[protein] + (6S)-5,6,7,8-tetrahydrofolate = N(6)-[(R)-dihydrolipoyl]-L-lysyl-[protein] + (6R)-5,10-methylene-5,6,7,8-tetrahydrofolate + NH4(+). Its function is as follows. The glycine cleavage system catalyzes the degradation of glycine. This Alkaliphilus metalliredigens (strain QYMF) protein is Aminomethyltransferase.